Reading from the N-terminus, the 287-residue chain is 2-dehydro-3-deoxyphosphooctonate aldolase (287 aa).

It belongs to the KdsA family.

Its subcellular location is the cytoplasm. It carries out the reaction D-arabinose 5-phosphate + phosphoenolpyruvate + H2O = 3-deoxy-alpha-D-manno-2-octulosonate-8-phosphate + phosphate. It functions in the pathway carbohydrate biosynthesis; 3-deoxy-D-manno-octulosonate biosynthesis; 3-deoxy-D-manno-octulosonate from D-ribulose 5-phosphate: step 2/3. Its pathway is bacterial outer membrane biogenesis; lipopolysaccharide biosynthesis. This is 2-dehydro-3-deoxyphosphooctonate aldolase from Rhodopseudomonas palustris (strain BisB5).